A 267-amino-acid polypeptide reads, in one-letter code: MKKILLTNDDGYHAKGIKALEQALEEMAEIYVVAPKHEKSACSQCITITAPLRAEKIKGKEGRHYRIDDGTPSDCVYLAINELFKHVCFDLVISGINLGSNMGEDTIYSGTVAGAIEGTIQGVPSIAISQILSNKNKNTPLSFDLAQKIIQDLVQNIFTKGYPLKGRKLLNVNVPNCSLQEYQGERITPKGYRLYKKEVHKRTDPKNESYFWLGLHPLEWQKRENEDRLSDFDAIASNHVSITPLNLDLTSYDDLKSLESWHEGMLK.

A divalent metal cation contacts are provided by D9, D10, S40, and N97.

It belongs to the SurE nucleotidase family. A divalent metal cation is required as a cofactor.

It is found in the cytoplasm. It carries out the reaction a ribonucleoside 5'-phosphate + H2O = a ribonucleoside + phosphate. In terms of biological role, nucleotidase that shows phosphatase activity on nucleoside 5'-monophosphates. The protein is 5'-nucleotidase SurE of Helicobacter pylori (strain HPAG1).